A 241-amino-acid polypeptide reads, in one-letter code: N-acetylmuramoyl-L-alanine amidase Rv3717 (241 aa).

An N-terminal signal peptide occupies residues 1–24 (MIVGVLVAAATPIISSASATPANI). One can recognise a MurNAc-LAA domain in the interval 29-230 (VFIDPGHNGA…KYANALVRGV (202 aa)). H35 contributes to the Zn(2+) binding site. The interval 45-69 (RQVPTGRGGTKNCQASGTSTNSGYP) is disordered. Residues 55–67 (KNCQASGTSTNSG) show a composition bias toward polar residues. The cysteines at positions 57 and 105 are disulfide-linked. Residues E70 and H125 each contribute to the Zn(2+) site. E200 (proton donor/acceptor) is an active-site residue.

The protein belongs to the N-acetylmuramoyl-L-alanine amidase 3 family. Monomer. Zn(2+) is required as a cofactor.

It localises to the periplasm. The catalysed reaction is Hydrolyzes the link between N-acetylmuramoyl residues and L-amino acid residues in certain cell-wall glycopeptides.. It participates in cell wall degradation; peptidoglycan degradation. With respect to regulation, the structure reveals a short flexible hairpin turn that partially occludes the active site and may be involved in autoregulation. Its function is as follows. Cell-wall hydrolase that hydrolyzes the amide bond between N-acetylmuramic acid and L-alanine in cell-wall glycopeptides. Is able to hydrolyze the cell walls of several bacterial species (i.e. Paenibacillus sp., B.avium, E.coli DH5alpha, E.aerogenes, L.acidophilus, B.thuringiensis, B.pumilus, B.subtilis and E.coli W3110), thereby showing that it is a cell-wall hydrolase with broad-spectrum activity. May have a role in peptidoglycan fragment recycling. The sequence is that of N-acetylmuramoyl-L-alanine amidase Rv3717 from Mycobacterium tuberculosis (strain ATCC 25618 / H37Rv).